Reading from the N-terminus, the 572-residue chain is Proline--tRNA ligase (572 aa).

It belongs to the class-II aminoacyl-tRNA synthetase family. ProS type 1 subfamily. In terms of assembly, homodimer.

Its subcellular location is the cytoplasm. It carries out the reaction tRNA(Pro) + L-proline + ATP = L-prolyl-tRNA(Pro) + AMP + diphosphate. Functionally, catalyzes the attachment of proline to tRNA(Pro) in a two-step reaction: proline is first activated by ATP to form Pro-AMP and then transferred to the acceptor end of tRNA(Pro). As ProRS can inadvertently accommodate and process non-cognate amino acids such as alanine and cysteine, to avoid such errors it has two additional distinct editing activities against alanine. One activity is designated as 'pretransfer' editing and involves the tRNA(Pro)-independent hydrolysis of activated Ala-AMP. The other activity is designated 'posttransfer' editing and involves deacylation of mischarged Ala-tRNA(Pro). The misacylated Cys-tRNA(Pro) is not edited by ProRS. The protein is Proline--tRNA ligase of Erwinia tasmaniensis (strain DSM 17950 / CFBP 7177 / CIP 109463 / NCPPB 4357 / Et1/99).